Consider the following 467-residue polypeptide: Putative pentatricopeptide repeat-containing protein At1g10330 (467 aa).

PPR repeat units follow at residues 50-84, 85-119, 120-150, 151-181, 182-216, 220-256, 257-287, 288-322, 323-358, and 359-389; these read TKCV…HVQP, NNLT…GFLW, DPFV…ILNP, CVVA…MPVT, DVVS…ERAV, NEAT…EIIL, TTTL…IRDK, KVCA…YVHP, NGIT…KIIP, and TSEH…LPFE. A type E motif; degenerate region spans residues 394–467; that stretch reads VLGALLGACK…RKIPAYSVLT (74 aa).

It belongs to the PPR family. PCMP-E subfamily.

This is Putative pentatricopeptide repeat-containing protein At1g10330 (PCMP-E71) from Arabidopsis thaliana (Mouse-ear cress).